A 282-amino-acid polypeptide reads, in one-letter code: F-box/SPRY domain-containing protein 1 (282 aa).

The tract at residues 1–32 (MAAAAINAAAPPPPVAPTAPPPPPPPPLSQAS) is disordered. Over residues 10–28 (APPPPVAPTAPPPPPPPPL) the composition is skewed to pro residues. One can recognise an F-box domain in the interval 29–78 (SQASGRLPSRVLELVFSYLDLPDLRSCGLVCKHWYRCLHGDENSEVWRSL). One can recognise a B30.2/SPRY domain in the interval 88-280 (LRTDILCNLP…VTLVYLGKPL (193 aa)).

Belongs to the FBXO45/Fsn family. Probable component of a E3 ubiquitin ligase complex.

It participates in protein modification; protein ubiquitination. The polypeptide is F-box/SPRY domain-containing protein 1 (fbxo45) (Xenopus tropicalis (Western clawed frog)).